A 334-amino-acid chain; its full sequence is D-fructose 1,6-bisphosphatase class 2/sedoheptulose 1,7-bisphosphatase (334 aa).

Mn(2+) contacts are provided by D33, E57, D85, and E88. Residues 88–90 (EGT), Y119, 164–166 (RAR), and 186–188 (DGD) contribute to the substrate site. Mn(2+) is bound at residue E213.

This sequence belongs to the FBPase class 2 family. In terms of assembly, homotetramer. Requires Mn(2+) as cofactor.

The enzyme catalyses beta-D-fructose 1,6-bisphosphate + H2O = beta-D-fructose 6-phosphate + phosphate. It catalyses the reaction D-sedoheptulose 1,7-bisphosphate + H2O = D-sedoheptulose 7-phosphate + phosphate. Its pathway is carbohydrate biosynthesis; Calvin cycle. In terms of biological role, catalyzes the hydrolysis of fructose 1,6-bisphosphate (Fru 1,6-P2) and sedoheptulose 1,7-bisphosphate (Sed 1,7-P2) to fructose 6-phosphate and sedoheptulose 7-phosphate, respectively. The chain is D-fructose 1,6-bisphosphatase class 2/sedoheptulose 1,7-bisphosphatase from Parasynechococcus marenigrum (strain WH8102).